A 110-amino-acid chain; its full sequence is Ribonuclease (110 aa).

Residue Glu-73 is the Proton acceptor of the active site. His-102 acts as the Proton donor in catalysis.

The protein belongs to the ribonuclease N1/T1 family.

It localises to the secreted. Functionally, hydrolyzes phosphodiester bonds in RNA, poly- and oligoribonucleotides resulting in 3'-nucleoside monophosphates via 2',3'-cyclophosphate intermediates. The polypeptide is Ribonuclease (Niallia circulans (Bacillus circulans)).